We begin with the raw amino-acid sequence, 472 residues long: Protein nucleotidyltransferase YdiU (472 aa).

ATP contacts are provided by Gly-86, Gly-88, Arg-89, Lys-109, Asp-121, Gly-122, Arg-172, and Arg-179. The active-site Proton acceptor is the Asp-244. Residues Asn-245 and Asp-254 each contribute to the Mg(2+) site. Position 254 (Asp-254) interacts with ATP.

It belongs to the SELO family. Mg(2+) serves as cofactor. Mn(2+) is required as a cofactor.

It catalyses the reaction L-seryl-[protein] + ATP = 3-O-(5'-adenylyl)-L-seryl-[protein] + diphosphate. The enzyme catalyses L-threonyl-[protein] + ATP = 3-O-(5'-adenylyl)-L-threonyl-[protein] + diphosphate. It carries out the reaction L-tyrosyl-[protein] + ATP = O-(5'-adenylyl)-L-tyrosyl-[protein] + diphosphate. The catalysed reaction is L-histidyl-[protein] + UTP = N(tele)-(5'-uridylyl)-L-histidyl-[protein] + diphosphate. It catalyses the reaction L-seryl-[protein] + UTP = O-(5'-uridylyl)-L-seryl-[protein] + diphosphate. The enzyme catalyses L-tyrosyl-[protein] + UTP = O-(5'-uridylyl)-L-tyrosyl-[protein] + diphosphate. Its function is as follows. Nucleotidyltransferase involved in the post-translational modification of proteins. It can catalyze the addition of adenosine monophosphate (AMP) or uridine monophosphate (UMP) to a protein, resulting in modifications known as AMPylation and UMPylation. This Ruegeria sp. (strain TM1040) (Silicibacter sp.) protein is Protein nucleotidyltransferase YdiU.